A 274-amino-acid chain; its full sequence is Diaminopimelate epimerase (274 aa).

The substrate site is built by Asn-11, Gln-44, and Asn-64. Cys-73 functions as the Proton donor in the catalytic mechanism. Substrate contacts are provided by residues 74 to 75 (GN), Asn-157, Asn-190, and 208 to 209 (ER). The active-site Proton acceptor is Cys-217. Residue 218–219 (GS) participates in substrate binding.

It belongs to the diaminopimelate epimerase family. As to quaternary structure, homodimer.

The protein localises to the cytoplasm. It carries out the reaction (2S,6S)-2,6-diaminopimelate = meso-2,6-diaminopimelate. It participates in amino-acid biosynthesis; L-lysine biosynthesis via DAP pathway; DL-2,6-diaminopimelate from LL-2,6-diaminopimelate: step 1/1. In terms of biological role, catalyzes the stereoinversion of LL-2,6-diaminopimelate (L,L-DAP) to meso-diaminopimelate (meso-DAP), a precursor of L-lysine and an essential component of the bacterial peptidoglycan. This chain is Diaminopimelate epimerase, found in Proteus mirabilis (strain HI4320).